A 91-amino-acid chain; its full sequence is Acyl carrier protein (91 aa).

In terms of domain architecture, Carrier spans 4 to 79; that stretch reads QQILDKVQSI…QAVDYILQHK (76 aa). Serine 39 is modified (O-(pantetheine 4'-phosphoryl)serine).

This sequence belongs to the acyl carrier protein (ACP) family. 4'-phosphopantetheine is transferred from CoA to a specific serine of apo-ACP by AcpS. This modification is essential for activity because fatty acids are bound in thioester linkage to the sulfhydryl of the prosthetic group.

The protein resides in the plastid. Its subcellular location is the chloroplast. It participates in lipid metabolism; fatty acid biosynthesis. Carrier of the growing fatty acid chain in fatty acid biosynthesis. The chain is Acyl carrier protein from Cyanidioschyzon merolae (strain NIES-3377 / 10D) (Unicellular red alga).